Reading from the N-terminus, the 141-residue chain is Nucleoside diphosphate kinase (141 aa).

6 residues coordinate ATP: Lys11, Phe59, Arg87, Thr93, Arg104, and Asn114. The active-site Pros-phosphohistidine intermediate is His117.

It belongs to the NDK family. In terms of assembly, homotetramer. Mg(2+) serves as cofactor.

The protein resides in the cytoplasm. The enzyme catalyses a 2'-deoxyribonucleoside 5'-diphosphate + ATP = a 2'-deoxyribonucleoside 5'-triphosphate + ADP. The catalysed reaction is a ribonucleoside 5'-diphosphate + ATP = a ribonucleoside 5'-triphosphate + ADP. In terms of biological role, major role in the synthesis of nucleoside triphosphates other than ATP. The ATP gamma phosphate is transferred to the NDP beta phosphate via a ping-pong mechanism, using a phosphorylated active-site intermediate. In Bordetella bronchiseptica (strain ATCC BAA-588 / NCTC 13252 / RB50) (Alcaligenes bronchisepticus), this protein is Nucleoside diphosphate kinase.